Reading from the N-terminus, the 301-residue chain is Recombination-associated protein RdgC (301 aa).

It belongs to the RdgC family.

It is found in the cytoplasm. The protein resides in the nucleoid. May be involved in recombination. The chain is Recombination-associated protein RdgC from Xanthomonas axonopodis pv. citri (strain 306).